The following is a 419-amino-acid chain: Interferon regulatory factor 3 (419 aa).

The residue at position 3 (threonine 3) is a Phosphothreonine. The segment at residues 5-111 is a DNA-binding region (IRF tryptophan pentad repeat); that stretch reads KPRILPWLVS…DPHKVYEFVT (107 aa). Serine 14 carries the phosphoserine modification. Phosphothreonine is present on threonine 75. 3 positions are modified to phosphoserine: serine 97, serine 123, and serine 135. The interval 140 to 419 is mediates interaction with ZDHHC11; that stretch reads PKLFDGLILG…DMDFQATGNI (280 aa). A Glycyl lysine isopeptide (Lys-Gly) (interchain with G-Cter in ISG15) cross-link involves residue lysine 188. The interval 194–353 is interaction with HERC5; sequence EQWEFEVTAF…MWPQDQPWVK (160 aa). Residues threonine 230, threonine 237, and threonine 246 each carry the phosphothreonine modification. Glycyl lysine isopeptide (Lys-Gly) (interchain with G-Cter in ISG15) cross-links involve residues lysine 353 and lysine 359. Lysine 359 is modified (N6-acetyllysine). Serine 378 carries the post-translational modification Phosphoserine. Serine 379 is subject to Diphosphoserine. At serine 379 the chain carries Phosphoserine; by TBK1. Residue serine 388 is modified to Phosphoserine; by IKKE. Phosphoserine is present on serine 390. The residue at position 396 (threonine 396) is a Phosphothreonine.

Belongs to the IRF family. Monomer. Homodimer; phosphorylation-induced. Interacts (when phosphorylated) with CREBBP. Interacts with MAVS (via phosphorylated pLxIS motif). Interacts with TICAM1 (via phosphorylated pLxIS motif). Interacts with STING1 (via phosphorylated pLxIS motif). Interacts with IKBKE and TBK1. Interacts with TICAM2. Interacts with RBCK1. Interacts with HERC5. Interacts with DDX3X; the interaction allows the phosphorylation and activation of IRF3 by IKBKE. Interacts with TRIM21 and ULK1, in the presence of TRIM21; this interaction leads to IRF3 degradation by autophagy. Interacts with RIOK3; RIOK3 probably mediates the interaction of TBK1 with IRF3. Interacts with ILRUN; the interaction inhibits IRF3 binding to its DNA consensus sequence. Interacts with LYAR; this interaction impairs IRF3 DNA-binding activity. Interacts with TRAF3. Interacts with ZDHHC11; ZDHHC11 recruits IRF3 to STING1 upon DNA virus infection and thereby promotes IRF3 activation. Interacts with HSP90AA1; the interaction mediates IRF3 association with TOMM70. Interacts with BCL2; the interaction decreases upon Sendai virus infection. Interacts with BAX; the interaction is direct, increases upon virus infection and mediates the formation of the apoptosis complex TOMM70:HSP90AA1:IRF3:BAX. Interacts with DDX56. Interacts with NBR1. Constitutively phosphorylated on many Ser/Thr residues. Activated following phosphorylation by TBK1 and IKBKE. Innate adapter proteins, such as MAVS, STING1 or TICAM1, are first activated by viral RNA, cytosolic DNA, and bacterial lipopolysaccharide (LPS), respectively, leading to activation of the kinases TBK1 and IKBKE. These kinases then phosphorylate the adapter proteins on the pLxIS motif, leading to recruitment of IRF3, thereby licensing IRF3 for phosphorylation by TBK1. Phosphorylation at Ser-379 is followed by pyrophosphorylation at the same residue, promoting phosphorylation at Ser-388. Phosphorylated IRF3 dissociates from the adapter proteins, dimerizes, and then enters the nucleus to induce IFNs. In terms of processing, pyrophosphorylated by UAP1 following phosphorylation at Ser-379 by TBK1. Pyrophosphorylation promotes subsequent phosphorylation at Ser-388, leading to homodimerization of IRF3. Post-translationally, acetylation at Lys-359 by KAT8 inhibits recruimtent to promoters and transcription factor activity. Acetylation by KAT8 is promoted by phosphorylation at Ser-388. Ubiquitinated; ubiquitination involves RBCK1 leading to proteasomal degradation. Polyubiquitinated; ubiquitination involves TRIM21 leading to proteasomal degradation. Ubiquitinated by UBE3C, leading to its degradation. Deubiquitinated by USP5 on both 'Lys-48'-linked unanchored and 'Lys-63'-linked anchored polyubiquitin, leading to inhibition of anti-RNA viral innate immunity. In terms of processing, ISGylated by HERC5 resulting in sustained IRF3 activation and in the inhibition of IRF3 ubiquitination by disrupting PIN1 binding. The phosphorylation state of IRF3 does not alter ISGylation. Post-translationally, proteolytically cleaved by apoptotic caspases during apoptosis, leading to its inactivation. Cleavage by CASP3 during virus-induced apoptosis inactivates it, preventing cytokine overproduction.

Its subcellular location is the cytoplasm. It is found in the nucleus. The protein localises to the mitochondrion. With respect to regulation, in the absence of viral infection, maintained as a monomer in an autoinhibited state. Phosphorylation by TBK1 and IKBKE disrupts this autoinhibition leading to the liberation of the DNA-binding and dimerization activities and its nuclear localization where it can activate type I IFN and ISG genes. Phosphorylation and activation follow the following steps: innate adapter proteins, such as MAVS, STING1 or TICAM1, are first activated by viral RNA, cytosolic DNA and bacterial lipopolysaccharide (LPS), respectively, leading to activation of the kinases TBK1 and IKBKE. These kinases then phosphorylate the adapter proteins on their pLxIS motif, leading to recruitment of IRF3, thereby licensing IRF3 for phosphorylation by TBK1. Phosphorylated IRF3 dissociates from the adapter proteins, dimerizes, and then enters the nucleus to induce IFNs. Key transcriptional regulator of type I interferon (IFN)-dependent immune responses which plays a critical role in the innate immune response against DNA and RNA viruses. Regulates the transcription of type I IFN genes (IFN-alpha and IFN-beta) and IFN-stimulated genes (ISG) by binding to an interferon-stimulated response element (ISRE) in their promoters. Acts as a more potent activator of the IFN-beta (IFNB) gene than the IFN-alpha (IFNA) gene and plays a critical role in both the early and late phases of the IFNA/B gene induction. Found in an inactive form in the cytoplasm of uninfected cells and following viral infection, double-stranded RNA (dsRNA), or toll-like receptor (TLR) signaling, is phosphorylated by IKBKE and TBK1 kinases. This induces a conformational change, leading to its dimerization and nuclear localization and association with CREB binding protein (CREBBP) to form dsRNA-activated factor 1 (DRAF1), a complex which activates the transcription of the type I IFN and ISG genes. Can activate distinct gene expression programs in macrophages and can induce significant apoptosis in primary macrophages. This Mus musculus (Mouse) protein is Interferon regulatory factor 3 (Irf3).